Here is a 196-residue protein sequence, read N- to C-terminus: Large ribosomal subunit protein bL9 (196 aa).

The protein belongs to the bacterial ribosomal protein bL9 family.

Functionally, binds to the 23S rRNA. The polypeptide is Large ribosomal subunit protein bL9 (Rhodopseudomonas palustris (strain HaA2)).